The chain runs to 389 residues: MYVRHLALTDFRSWSRVELELSPGRTVFVGPNGFGKTNLVEALWYSATLGSHRVASDAPLIRAGAERAVVSTIIVNEGRELAVDLDITSGRANKARLNRSPVRSAREILGVLRAVLFAPEDLALVRGDPGDRRRYLDELATTRRPRIAAVRADYDKVVRQRTALLKTASSARFRGDRGALETLDVWDGHLAAHGAQLIAARVDLVHELAPEVEKAYQLLAPASRPATVRYRSGVEVVEAEAAAGNSDPEVFEAALLDALSRRRDAELERGVCLVGPHRDDLELRLGDQPAKGFASHGESWSMALSLRLAAYELLRADGSDPVLLLDDVFAELDSARRQALAQVAASAEQVLVTAAVGEDIPVDWDARRIEIAMTDSDLGRVSVLSGVTQ.

Position 30–37 (30–37 (GPNGFGKT)) interacts with ATP.

This sequence belongs to the RecF family.

The protein localises to the cytoplasm. The RecF protein is involved in DNA metabolism; it is required for DNA replication and normal SOS inducibility. RecF binds preferentially to single-stranded, linear DNA. It also seems to bind ATP. The polypeptide is DNA replication and repair protein RecF (Mycolicibacterium gilvum (strain PYR-GCK) (Mycobacterium gilvum (strain PYR-GCK))).